The sequence spans 777 residues: Ethylene receptor 4 (777 aa).

Transmembrane regions (helical) follow at residues 49–69 (LLIA…ATCA), 77–97 (AVLH…LAAF), and 113–133 (AAKV…LTFI). Cu cation contacts are provided by C88 and H92. Residues 184–344 (DAHAILRTTA…VVADQAAVAL (161 aa)) enclose the GAF domain. Positions 387-521 (AMCHAMRRPV…NTESGACRLS (135 aa)) constitute a Histidine kinase domain. A Phosphohistidine; by autocatalysis modification is found at H390. One can recognise a Response regulatory domain in the interval 645–774 (RVLLADDDAM…ALGAQLCRVL (130 aa)). D696 bears the 4-aspartylphosphate mark.

Belongs to the ethylene receptor family. Requires Cu cation as cofactor.

It is found in the endoplasmic reticulum membrane. It catalyses the reaction ATP + protein L-histidine = ADP + protein N-phospho-L-histidine.. Ethylene receptor related to bacterial two-component regulators. Acts as a redundant negative regulator of ethylene signaling. This is Ethylene receptor 4 from Oryza sativa subsp. indica (Rice).